The primary structure comprises 657 residues: Threonine--tRNA ligase (657 aa).

A TGS domain is found at 1–61; the sequence is MINVTLPDGS…EGDASVAIIT (61 aa). Residues 244 to 549 form a catalytic region; sequence DHRKLGAQLD…LIENYAGSFP (306 aa). Zn(2+)-binding residues include Cys-349, His-400, and His-526.

This sequence belongs to the class-II aminoacyl-tRNA synthetase family. As to quaternary structure, homodimer. Zn(2+) is required as a cofactor.

Its subcellular location is the cytoplasm. It catalyses the reaction tRNA(Thr) + L-threonine + ATP = L-threonyl-tRNA(Thr) + AMP + diphosphate + H(+). Its function is as follows. Catalyzes the attachment of threonine to tRNA(Thr) in a two-step reaction: L-threonine is first activated by ATP to form Thr-AMP and then transferred to the acceptor end of tRNA(Thr). Also edits incorrectly charged L-seryl-tRNA(Thr). In Hyphomonas neptunium (strain ATCC 15444), this protein is Threonine--tRNA ligase.